The sequence spans 239 residues: Ribitol-5-phosphate cytidylyltransferase (239 aa).

CTP contacts are provided by residues 7–10 (FAGG) and 80–86 (GETGQMS).

This sequence belongs to the IspD/TarI cytidylyltransferase family. TarI subfamily.

The enzyme catalyses D-ribitol 5-phosphate + CTP + H(+) = CDP-L-ribitol + diphosphate. It functions in the pathway cell wall biogenesis; poly(ribitol phosphate) teichoic acid biosynthesis. Catalyzes the transfer of the cytidylyl group of CTP to D-ribitol 5-phosphate. This Streptococcus agalactiae serotype III (strain NEM316) protein is Ribitol-5-phosphate cytidylyltransferase.